We begin with the raw amino-acid sequence, 590 residues long: Aspartate--tRNA(Asp/Asn) ligase (590 aa).

Glu-175 contributes to the L-aspartate binding site. The tract at residues 199 to 202 (QQYK) is aspartate. Residues Arg-221 and His-450 each coordinate L-aspartate. Residue 221–223 (RDE) coordinates ATP. Glu-484 serves as a coordination point for ATP. Arg-491 serves as a coordination point for L-aspartate. Residue 536–539 (GVDR) participates in ATP binding.

Belongs to the class-II aminoacyl-tRNA synthetase family. Type 1 subfamily. Homodimer.

It is found in the cytoplasm. The catalysed reaction is tRNA(Asx) + L-aspartate + ATP = L-aspartyl-tRNA(Asx) + AMP + diphosphate. Aspartyl-tRNA synthetase with relaxed tRNA specificity since it is able to aspartylate not only its cognate tRNA(Asp) but also tRNA(Asn). Reaction proceeds in two steps: L-aspartate is first activated by ATP to form Asp-AMP and then transferred to the acceptor end of tRNA(Asp/Asn). The polypeptide is Aspartate--tRNA(Asp/Asn) ligase (Nitrobacter winogradskyi (strain ATCC 25391 / DSM 10237 / CIP 104748 / NCIMB 11846 / Nb-255)).